The primary structure comprises 182 residues: MKSQETRSSWKRRGSRYKARRRAVDILFEAEMRDIDPVAIVEDRVVLSRLNGTDVNQVPSYTKEIVSGAAMELDRLDELIAAHLAEDWSLERIMTVDRAILRVSVWELIFNPDVPLATAIIEGVELASEYSTDVSPAYVHALLDSIAKNIDEYRAGSVTPVENSEAEAAGYPVEESIEEDSQ.

A disordered region spans residues 159–182 (TPVENSEAEAAGYPVEESIEEDSQ).

It belongs to the NusB family.

Involved in transcription antitermination. Required for transcription of ribosomal RNA (rRNA) genes. Binds specifically to the boxA antiterminator sequence of the ribosomal RNA (rrn) operons. In Corynebacterium diphtheriae (strain ATCC 700971 / NCTC 13129 / Biotype gravis), this protein is Transcription antitermination protein NusB.